The following is a 496-amino-acid chain: Lysine--tRNA ligase (496 aa).

Mg(2+)-binding residues include glutamate 409 and glutamate 416.

The protein belongs to the class-II aminoacyl-tRNA synthetase family. As to quaternary structure, homodimer. The cofactor is Mg(2+).

The protein localises to the cytoplasm. The enzyme catalyses tRNA(Lys) + L-lysine + ATP = L-lysyl-tRNA(Lys) + AMP + diphosphate. The sequence is that of Lysine--tRNA ligase from Streptococcus pneumoniae serotype 4 (strain ATCC BAA-334 / TIGR4).